The chain runs to 182 residues: Large ribosomal subunit protein uL6 (182 aa).

This sequence belongs to the universal ribosomal protein uL6 family. As to quaternary structure, part of the 50S ribosomal subunit.

Functionally, this protein binds to the 23S rRNA, and is important in its secondary structure. It is located near the subunit interface in the base of the L7/L12 stalk, and near the tRNA binding site of the peptidyltransferase center. The protein is Large ribosomal subunit protein uL6 of Pelotomaculum thermopropionicum (strain DSM 13744 / JCM 10971 / SI).